Here is an 876-residue protein sequence, read N- to C-terminus: GATOR2 complex protein MIOS (876 aa).

WD repeat units follow at residues 59 to 101, 112 to 156, 182 to 222, 224 to 262, 266 to 307, and 400 to 440; these read SDTP…NSKS, KHAR…SPEA, GQND…QKTF, NTKA…KPVF, EQPK…MPFG, and RAQS…KQYT. The C4-type zinc finger occupies 738 to 784; the sequence is VSCNFCGKSISYSCSAMPHQGRGFSQYGVSGSPTKSKVTSCPGCRKP. Positions 740, 743, 778, 781, 791, 830, 833, 835, 838, 841, 852, 857, and 861 each coordinate Zn(2+). The RING-type; atypical zinc-finger motif lies at 785–866; that stretch reads LPRCALCLMN…CTCKCMQLDT (82 aa).

Belongs to the WD repeat mio family. Component of the GATOR2 subcomplex, composed of MIOS, SEC13, SEH1L, WDR24 and WDR59. The GATOR2 complex interacts with CASTOR1 and CASTOR2; the interaction is negatively regulated by arginine. The GATOR2 complex interacts with SESN1, SESN2 and SESN3; the interaction is negatively regulated by amino acids. Interacts with SAR1; the interaction is direct, disrupted by leucine and mediates the interaction of SAR1 with the GATOR2 complex to negatively regulate the TORC1 signaling upon leucine deprivation.

Its subcellular location is the lysosome membrane. With respect to regulation, the GATOR2 complex is negatively regulated by the upstream amino acid sensors CASTOR1 and SESN2, which sequester the GATOR2 complex in absence of amino acids. In the presence of abundant amino acids, GATOR2 is released from CASTOR1 and SESN2 and activated. As a component of the GATOR2 complex, functions as an activator of the amino acid-sensing branch of the mTORC1 signaling pathway. The GATOR2 complex indirectly activates mTORC1 through the inhibition of the GATOR1 subcomplex. GATOR2 probably acts as an E3 ubiquitin-protein ligase toward GATOR1. In the presence of abundant amino acids, the GATOR2 complex mediates ubiquitination of the NPRL2 core component of the GATOR1 complex, leading to GATOR1 inactivation. In the absence of amino acids, GATOR2 is inhibited, activating the GATOR1 complex. Within the GATOR2 complex, MIOS is required to prevent autoubiquitination of WDR24, the catalytic subunit of the complex. In Danio rerio (Zebrafish), this protein is GATOR2 complex protein MIOS.